Consider the following 132-residue polypeptide: Bombinin-like peptides (132 aa).

An N-terminal signal peptide occupies residues 1-18 (MNFKYIIAVSFLIASAYA). Residues 19 to 42 (RSEEYDIQSLSQRDVLEEESLRKI) constitute a propeptide that is removed on maturation. Phenylalanine 68 is modified (phenylalanine amide). A propeptide spanning residues 72–112 (TAEDHEVMKRLEAAMRDLDSLDYPEEASERETRGFNQEEKE) is cleaved from the precursor. The residue at position 131 (leucine 131) is a Leucine amide.

The protein belongs to the bombinin family. Expressed by the skin glands.

Its subcellular location is the secreted. Its function is as follows. Has antimicrobial activity against Gram-negative bacterium E.coli (MIC=26.3 uM), Gram-positive bacterium S.aureus (MIC=26.3 uM) and yeast C.albicans (MIC=52.5 uM). Has moderate hemolytic activity towards human erythrocytes at a concentration of 52.2 uM. Has no antimicrobial activity at concentrations up to 161 uM. Has moderate hemolytic activity towards human erythrocytes at a concentration of 40.3 uM. In Bombina orientalis (Oriental fire-bellied toad), this protein is Bombinin-like peptides.